The following is a 187-amino-acid chain: Acireductone dioxygenase (187 aa).

Fe(2+) is bound by residues His87, His89, Glu93, and His136. His87, His89, Glu93, and His136 together coordinate Ni(2+).

The protein belongs to the acireductone dioxygenase (ARD) family. It depends on Fe(2+) as a cofactor. Ni(2+) is required as a cofactor.

It localises to the cytoplasm. The protein localises to the nucleus. The enzyme catalyses 1,2-dihydroxy-5-(methylsulfanyl)pent-1-en-3-one + O2 = 4-methylsulfanyl-2-oxobutanoate + formate + 2 H(+). It carries out the reaction 1,2-dihydroxy-5-(methylsulfanyl)pent-1-en-3-one + O2 = 3-(methylsulfanyl)propanoate + CO + formate + 2 H(+). Its pathway is amino-acid biosynthesis; L-methionine biosynthesis via salvage pathway; L-methionine from S-methyl-5-thio-alpha-D-ribose 1-phosphate: step 5/6. Functionally, catalyzes 2 different reactions between oxygen and the acireductone 1,2-dihydroxy-3-keto-5-methylthiopentene (DHK-MTPene) depending upon the metal bound in the active site. Fe-containing acireductone dioxygenase (Fe-ARD) produces formate and 2-keto-4-methylthiobutyrate (KMTB), the alpha-ketoacid precursor of methionine in the methionine recycle pathway. Ni-containing acireductone dioxygenase (Ni-ARD) produces methylthiopropionate, carbon monoxide and formate, and does not lie on the methionine recycle pathway. The protein is Acireductone dioxygenase of Cryptococcus neoformans var. neoformans serotype D (strain JEC21 / ATCC MYA-565) (Filobasidiella neoformans).